The primary structure comprises 446 residues: Amino-acid acetyltransferase (446 aa).

The region spanning E299 to S438 is the N-acetyltransferase domain.

This sequence belongs to the acetyltransferase family. ArgA subfamily.

The protein resides in the cytoplasm. The catalysed reaction is L-glutamate + acetyl-CoA = N-acetyl-L-glutamate + CoA + H(+). It participates in amino-acid biosynthesis; L-arginine biosynthesis; N(2)-acetyl-L-ornithine from L-glutamate: step 1/4. The chain is Amino-acid acetyltransferase from Aliivibrio fischeri (strain ATCC 700601 / ES114) (Vibrio fischeri).